The primary structure comprises 567 residues: 2-succinyl-5-enolpyruvyl-6-hydroxy-3-cyclohexene-1-carboxylate synthase (567 aa).

This sequence belongs to the TPP enzyme family. MenD subfamily. As to quaternary structure, homodimer. Mg(2+) serves as cofactor. It depends on Mn(2+) as a cofactor. Thiamine diphosphate is required as a cofactor.

The catalysed reaction is isochorismate + 2-oxoglutarate + H(+) = 5-enolpyruvoyl-6-hydroxy-2-succinyl-cyclohex-3-ene-1-carboxylate + CO2. It participates in quinol/quinone metabolism; 1,4-dihydroxy-2-naphthoate biosynthesis; 1,4-dihydroxy-2-naphthoate from chorismate: step 2/7. The protein operates within quinol/quinone metabolism; menaquinone biosynthesis. Functionally, catalyzes the thiamine diphosphate-dependent decarboxylation of 2-oxoglutarate and the subsequent addition of the resulting succinic semialdehyde-thiamine pyrophosphate anion to isochorismate to yield 2-succinyl-5-enolpyruvyl-6-hydroxy-3-cyclohexene-1-carboxylate (SEPHCHC). In Yersinia pseudotuberculosis serotype IB (strain PB1/+), this protein is 2-succinyl-5-enolpyruvyl-6-hydroxy-3-cyclohexene-1-carboxylate synthase.